A 384-amino-acid chain; its full sequence is MSWQDKINAALDARRAADALRRRYPVAQGAGRWLVADDRQYLNFSSNDYLGLSHHPQIIRAWKLGAEQFGVGSGGSGHVSGYSVAHQVLEEELAEWLGYSRALLFISGFAANQAVIAAMMAKEDRIVADRLSHASLLEAASLSPSPLRRFAHNDVTHLARLLASPCPGQQLVVTEGVFSMDGDSAPLEEIQQVTQQHDGWLMVDDAHGTGVIGEQGRGSCWLQKVKPELLVVTFGKGFGVSGAAVLCSNTVADYLLQFARHLIYSTSMPPAQAQALRASLAVIRSDEGDARREKLVSLIARFRAGVQDLPFTLADSCSAIQPLIVGDNSRALQLAEKLRQQGCWVTAIRPPTVPAGTARLRLTLTAAHEMQDIDRLLEVLHGND.

Residue Arg21 participates in substrate binding. Pyridoxal 5'-phosphate is bound at residue 108–109 (GF). A substrate-binding site is contributed by His133. Positions 179, 207, and 233 each coordinate pyridoxal 5'-phosphate. Position 236 is an N6-(pyridoxal phosphate)lysine (Lys236). Thr352 provides a ligand contact to substrate.

It belongs to the class-II pyridoxal-phosphate-dependent aminotransferase family. BioF subfamily. As to quaternary structure, homodimer. It depends on pyridoxal 5'-phosphate as a cofactor.

The enzyme catalyses 6-carboxyhexanoyl-[ACP] + L-alanine + H(+) = (8S)-8-amino-7-oxononanoate + holo-[ACP] + CO2. Its pathway is cofactor biosynthesis; biotin biosynthesis. Its function is as follows. Catalyzes the decarboxylative condensation of pimeloyl-[acyl-carrier protein] and L-alanine to produce 8-amino-7-oxononanoate (AON), [acyl-carrier protein], and carbon dioxide. The polypeptide is 8-amino-7-oxononanoate synthase (Escherichia coli O7:K1 (strain IAI39 / ExPEC)).